A 109-amino-acid chain; its full sequence is MNERDDILQAVYRVIKERKGASADSSYTASLLQKGIDKILKKLGEEATEVVIAGKGGKREEIVYETADLFFHTLVLLGYYDIDPEEIYAELRRRFGTSGIAEKASRPKE.

This sequence belongs to the PRA-PH family.

It localises to the cytoplasm. The catalysed reaction is 1-(5-phospho-beta-D-ribosyl)-ATP + H2O = 1-(5-phospho-beta-D-ribosyl)-5'-AMP + diphosphate + H(+). The protein operates within amino-acid biosynthesis; L-histidine biosynthesis; L-histidine from 5-phospho-alpha-D-ribose 1-diphosphate: step 2/9. In Geobacter metallireducens (strain ATCC 53774 / DSM 7210 / GS-15), this protein is Phosphoribosyl-ATP pyrophosphatase.